We begin with the raw amino-acid sequence, 140 residues long: Phosphatidylinositol N-acetylglucosaminyltransferase subunit GPI19 (140 aa).

Residues 1-12 (MYTKEYYWFSQY) are Cytoplasmic-facing. A helical transmembrane segment spans residues 13–33 (MIITSTLVLTIIWSILPSSLG). The Lumenal portion of the chain corresponds to 34–52 (EAAPKQFINTLLDIFPQRR). Residues 53–73 (WIITLESIMLMGMLCTYIGLL) traverse the membrane as a helical segment. The Cytoplasmic portion of the chain corresponds to 74 to 140 (MYNEDTLTPP…YLYDNDHTST (67 aa)).

It belongs to the GPI19 family. Component of the phosphatidylinositol N-acetylglucosaminyltransferase (GPI-GlcNAc transferase) complex composed of at least GPI1, GPI2, GPI3, GPI15, GPI19 and ERI1. Interacts with GPI2.

The protein localises to the endoplasmic reticulum membrane. It carries out the reaction a 1,2-diacyl-sn-glycero-3-phospho-(1D-myo-inositol) + UDP-N-acetyl-alpha-D-glucosamine = a 6-(N-acetyl-alpha-D-glucosaminyl)-1-(1,2-diacyl-sn-glycero-3-phospho)-1D-myo-inositol + UDP + H(+). It participates in glycolipid biosynthesis; glycosylphosphatidylinositol-anchor biosynthesis. Functionally, part of the complex catalyzing the transfer of N-acetylglucosamine from UDP-N-acetylglucosamine to phosphatidylinositol, the first step of GPI biosynthesis. Involved in cell wall biosynthesis. The chain is Phosphatidylinositol N-acetylglucosaminyltransferase subunit GPI19 (GPI19) from Saccharomyces cerevisiae (strain ATCC 204508 / S288c) (Baker's yeast).